The sequence spans 254 residues: Zinc transporter GufA (254 aa).

Helical transmembrane passes span 4–24 (GLVASLLAGTATGLGALPVLV), 74–94 (VAAGVLLGGLFLRVWHDLMPH), 112–132 (ALLFVLAMTLHNFPEGLAVGV), 143–163 (LSVALGIGAQNIPEGLVVALA), 176–196 (FLALLTGMVEPVGALFGVLAL), 198–218 (LSSALLPWGLAFAGGAMLYVI), and 234–254 (EATTGLMWGFVLALVLDMSLG). Asn-123, Glu-126, Gln-152, Asn-153, Glu-156, and Glu-185 together coordinate Zn(2+).

The protein belongs to the ZIP transporter (TC 2.A.5) family. In terms of assembly, homodimer.

The protein resides in the cell inner membrane. Functionally, mediates the uptake of Zn(2+). The chain is Zinc transporter GufA (gufA) from Myxococcus xanthus.